A 148-amino-acid polypeptide reads, in one-letter code: Ribonuclease pancreatic (148 aa).

The signal sequence occupies residues 1–25; that stretch reads MGLEKSLLLLPLLVLVLGCVQPSLG. Residues lysine 32 and arginine 35 each coordinate substrate. The active-site Proton acceptor is histidine 37. 4 disulfides stabilise this stretch: cysteine 50–cysteine 108, cysteine 64–cysteine 119, cysteine 82–cysteine 134, and cysteine 89–cysteine 96. Residues 65–69 and lysine 90 each bind substrate; that span reads KPVNT. Histidine 143 functions as the Proton donor in the catalytic mechanism.

This sequence belongs to the pancreatic ribonuclease family. In terms of assembly, monomer. Interacts with and forms tight 1:1 complexes with RNH1. Dimerization of two such complexes may occur. Interaction with RNH1 inhibits this protein. Pancreas.

The protein localises to the secreted. The catalysed reaction is an [RNA] containing cytidine + H2O = an [RNA]-3'-cytidine-3'-phosphate + a 5'-hydroxy-ribonucleotide-3'-[RNA].. The enzyme catalyses an [RNA] containing uridine + H2O = an [RNA]-3'-uridine-3'-phosphate + a 5'-hydroxy-ribonucleotide-3'-[RNA].. Functionally, endonuclease that catalyzes the cleavage of RNA on the 3' side of pyrimidine nucleotides. Acts on single-stranded and double-stranded RNA. This Gerbillus nigeriae (Nigerian gerbil) protein is Ribonuclease pancreatic (RNASE1).